The chain runs to 461 residues: Chromosomal replication initiator protein DnaA (461 aa).

Residues 1 to 83 (MTASLWQQCL…LHFAVGRRPT (83 aa)) are domain I, interacts with DnaA modulators. Positions 83–124 (TAATVQMNTAAAPVADVRIGPAITVPSWTSKQDAMPEINHKS) are domain II. Positions 125–341 (NINETYTFEN…GALNRVIANA (217 aa)) are domain III, AAA+ region. Residues G169, G171, K172, and T173 each contribute to the ATP site. Residues 342–461 (RFTGKPINID…YSNLIRTLSS (120 aa)) form a domain IV, binds dsDNA region.

This sequence belongs to the DnaA family. Oligomerizes as a right-handed, spiral filament on DNA at oriC.

It localises to the cytoplasm. Its function is as follows. Plays an essential role in the initiation and regulation of chromosomal replication. ATP-DnaA binds to the origin of replication (oriC) to initiate formation of the DNA replication initiation complex once per cell cycle. Binds the DnaA box (a 9 base pair repeat at the origin) and separates the double-stranded (ds)DNA. Forms a right-handed helical filament on oriC DNA; dsDNA binds to the exterior of the filament while single-stranded (ss)DNA is stabiized in the filament's interior. The ATP-DnaA-oriC complex binds and stabilizes one strand of the AT-rich DNA unwinding element (DUE), permitting loading of DNA polymerase. After initiation quickly degrades to an ADP-DnaA complex that is not apt for DNA replication. Binds acidic phospholipids. This chain is Chromosomal replication initiator protein DnaA, found in Tolumonas auensis (strain DSM 9187 / NBRC 110442 / TA 4).